Reading from the N-terminus, the 291-residue chain is ATP synthase gamma chain (291 aa).

Belongs to the ATPase gamma chain family. As to quaternary structure, F-type ATPases have 2 components, CF(1) - the catalytic core - and CF(0) - the membrane proton channel. CF(1) has five subunits: alpha(3), beta(3), gamma(1), delta(1), epsilon(1). CF(0) has three main subunits: a, b and c.

Its subcellular location is the cell membrane. Functionally, produces ATP from ADP in the presence of a proton gradient across the membrane. The gamma chain is believed to be important in regulating ATPase activity and the flow of protons through the CF(0) complex. This Streptococcus pyogenes serotype M1 protein is ATP synthase gamma chain.